A 504-amino-acid polypeptide reads, in one-letter code: Anthocyanidin 3-O-glucoside 5-O-glucosyltransferase (504 aa).

H23 serves as the catalytic Proton acceptor. H23 provides a ligand contact to an anthocyanidin. The tract at residues 107–126 (TKKGQGQGQGQGQGQGQGQG) is disordered. Residues 111 to 125 (QGQGQGQGQGQGQGQ) are compositionally biased toward gly residues. The UDP-alpha-D-glucose site is built by T157, Q377, H392, W395, N396, S397, E400, D416, and Q417.

Belongs to the UDP-glycosyltransferase family. Predominantly expressed in petals and weakly in filaments. Not expressed in leaves, stems and other floral organs.

The catalysed reaction is an anthocyanidin 3-O-beta-D-glucoside + UDP-alpha-D-glucose = an anthocyanidin 3,5-di-O-beta-D-glucoside + UDP + 2 H(+). The protein operates within pigment biosynthesis; anthocyanin biosynthesis. Its function is as follows. Catalyzes the glucosylation at the O-5 position of anthocyanidin 3-glucosides to form anthocyanidin 3,5-di-O-glucosides using UDP-glucose as sugar donor. Anthocyanidin 3,5-di-O-glucosides are molecules that are responsible for pigmentation. Involved in biosynsthesis of accumulate gentiodelphin, a unique polyacylated delphinidin-type anthocyanin, in the petals. Also acts on anthocyanidin 3-O-(6-O-malonylglucoside). Much less active with hydroxycinnamoylglucose derivatives. No activity in the absence of the 3-O-glucoside group. The protein is Anthocyanidin 3-O-glucoside 5-O-glucosyltransferase (5GT7) of Gentiana triflora (Clustered gentian).